The primary structure comprises 454 residues: Probable tRNA methyltransferase 9B (454 aa).

Serine 214 carries the post-translational modification Phosphoserine.

It belongs to the methyltransferase superfamily. As to expression, down-regulated in breast, bladder, colorectal, cervix and testicular carcinomas.

May modify wobble uridines in specific arginine and glutamic acid tRNAs. Acts as a tumor suppressor by promoting the expression of LIN9. In Homo sapiens (Human), this protein is Probable tRNA methyltransferase 9B.